Here is a 379-residue protein sequence, read N- to C-terminus: Probable leucine aminopeptidase ARB_01443 (379 aa).

The first 18 residues, 1-18 (MKIATLAVVSAFAATAIA), serve as a signal peptide directing secretion. 2 residues coordinate Zn(2+): His-182 and Asp-201. Residues Asn-202 and Asn-226 are each glycosylated (N-linked (GlcNAc...) asparagine). Residues Glu-240 and Asp-267 each contribute to the Zn(2+) site. An intrachain disulfide couples Cys-312 to Cys-316. Position 345 (His-345) interacts with Zn(2+).

This sequence belongs to the peptidase M28 family. M28E subfamily. Monomer. Requires Zn(2+) as cofactor.

The protein resides in the secreted. Its function is as follows. Probable extracellular aminopeptidase which contributes to pathogenicity. This Arthroderma benhamiae (strain ATCC MYA-4681 / CBS 112371) (Trichophyton mentagrophytes) protein is Probable leucine aminopeptidase ARB_01443.